The following is a 113-amino-acid chain: Large ribosomal subunit protein bL17 (113 aa).

Belongs to the bacterial ribosomal protein bL17 family. Part of the 50S ribosomal subunit. Contacts protein L32.

The protein is Large ribosomal subunit protein bL17 of Clostridium botulinum (strain Alaska E43 / Type E3).